Consider the following 501-residue polypeptide: Aerobic glycerol-3-phosphate dehydrogenase (501 aa).

5–33 (DLIVIGGGINGAGIAADAAGRGLSVLMLE) provides a ligand contact to FAD.

It belongs to the FAD-dependent glycerol-3-phosphate dehydrogenase family. The cofactor is FAD.

It is found in the cytoplasm. The catalysed reaction is a quinone + sn-glycerol 3-phosphate = dihydroxyacetone phosphate + a quinol. Its pathway is polyol metabolism; glycerol degradation via glycerol kinase pathway; glycerone phosphate from sn-glycerol 3-phosphate (aerobic route): step 1/1. In terms of biological role, conversion of glycerol 3-phosphate to dihydroxyacetone. Uses molecular oxygen or nitrate as electron acceptor. This is Aerobic glycerol-3-phosphate dehydrogenase (glpD) from Escherichia coli (strain K12).